The primary structure comprises 280 residues: MQVGCHVSISGGIDRSVDNAVERGCTAFQIFSRNPRGWRAKEISKDEAGTFKKKLKESKIEPSGTCVHMPYLPNLASTNDESHKKSVDTLIGEVERCGLLGIPFLVTHLGSHLGAGEEKGIERLVKAYKSAAGVKNGVTILLENTAGQKNSVGSEFGQLGSILSQLRPAKRFGVCLDTCHAFAYGYDLSTRAGAKKSFDEFDKKVGLDNLRVLHLNDAKAGCGSKLDRHYHVGLGSIGKEGMRAAARLASKRGIPMVVETPVDETRDDVGNIKAARALAG.

Zn(2+) is bound by residues H68, H108, E143, D177, H180, H214, D227, H229, and E259.

It belongs to the AP endonuclease 2 family. It depends on Zn(2+) as a cofactor.

It carries out the reaction Endonucleolytic cleavage to 5'-phosphooligonucleotide end-products.. Functionally, endonuclease IV plays a role in DNA repair. It cleaves phosphodiester bonds at apurinic or apyrimidinic (AP) sites, generating a 3'-hydroxyl group and a 5'-terminal sugar phosphate. This chain is Probable endonuclease 4, found in Cenarchaeum symbiosum (strain A).